A 453-amino-acid chain; its full sequence is tRNA modification GTPase MnmE (453 aa).

Positions 22, 79, and 119 each coordinate (6S)-5-formyl-5,6,7,8-tetrahydrofolate. Residues 215-376 (GMKVVIAGRP…LKQHLKSLMG (162 aa)) enclose the TrmE-type G domain. N225 contacts K(+). GTP is bound by residues 225–230 (NAGKSS), 244–250 (TEIAGTT), 269–272 (DTAG), and 334–337 (NKAD). S229 lines the Mg(2+) pocket. 3 residues coordinate K(+): T244, I246, and T249. T250 is a Mg(2+) binding site. K453 is a binding site for (6S)-5-formyl-5,6,7,8-tetrahydrofolate.

The protein belongs to the TRAFAC class TrmE-Era-EngA-EngB-Septin-like GTPase superfamily. TrmE GTPase family. In terms of assembly, homodimer. Heterotetramer of two MnmE and two MnmG subunits. K(+) is required as a cofactor.

The protein resides in the cytoplasm. Its function is as follows. Exhibits a very high intrinsic GTPase hydrolysis rate. Involved in the addition of a carboxymethylaminomethyl (cmnm) group at the wobble position (U34) of certain tRNAs, forming tRNA-cmnm(5)s(2)U34. The sequence is that of tRNA modification GTPase MnmE from Shewanella oneidensis (strain ATCC 700550 / JCM 31522 / CIP 106686 / LMG 19005 / NCIMB 14063 / MR-1).